Consider the following 27-residue polypeptide: Delta-conotoxin TsVIA (27 aa).

Cystine bridges form between Cys1/Cys17, Cys8/Cys21, and Cys16/Cys25.

This sequence belongs to the conotoxin O1 superfamily. As to expression, expressed by the venom duct.

The protein localises to the secreted. Functionally, delta-conotoxins bind to site 6 of voltage-gated sodium channels (Nav) and inhibit the inactivation process. This toxin inhibits tetrodotoxin(TTX)-sensitive sodium channels. A test on mouse Nav1.6/SCN8A confirms this sensitivity. The protein is Delta-conotoxin TsVIA of Conus tessulatus (Tessellate cone).